The chain runs to 98 residues: DNA-directed RNA polymerase subunit omega (98 aa).

The protein belongs to the RNA polymerase subunit omega family. As to quaternary structure, the RNAP catalytic core consists of 2 alpha, 1 beta, 1 beta' and 1 omega subunit. When a sigma factor is associated with the core the holoenzyme is formed, which can initiate transcription.

It catalyses the reaction RNA(n) + a ribonucleoside 5'-triphosphate = RNA(n+1) + diphosphate. In terms of biological role, promotes RNA polymerase assembly. Latches the N- and C-terminal regions of the beta' subunit thereby facilitating its interaction with the beta and alpha subunits. The chain is DNA-directed RNA polymerase subunit omega from Tropheryma whipplei (strain Twist) (Whipple's bacillus).